The primary structure comprises 415 residues: MILRIRSRDGTDRITVPDPAAATVGDLQRLIAARVTVPVPLQRLSLDPALLLPSSASAALLADPAAPLSSLRLSNGSFVYLSYPPDARSSQPPPPKALSAAGSFGKKMTMDDLIARQIRVTRQEAPLCAAASFDRDSANAFQLHVAESLAFATKRAGFLYGRVDADTKEVFVDFIYEPPQVGTEDVVQLMRDAQEEARVDAIAHGLGMRRVGLVFTQAVGRKTSDTGEYTMSNREVLQATELQAEGGIPEWVTAIVKLEVGDDGSGDVHFEAFQMSEICVKLFKDGVLETEIGDKDDPRLSKMRKEVVAGGKDTMEVDNDFFLVPVKISDHQGPLSTGFPIENRGNPVAMSALKSHLDRAKHLPFVKRISDFHLLLLVAAFLDIKADVPALTACVKNQSVVPEGYQLLIESLAGA.

An MPN domain is found at Ala-130–Cys-279.

The protein belongs to the NPL4 family.

The protein localises to the endoplasmic reticulum. Its pathway is protein degradation; proteasomal ubiquitin-dependent pathway. Its function is as follows. May be part of a complex that binds ubiquitinated proteins and that is necessary for the export of misfolded proteins from the ER to the cytoplasm, where they are degraded by the proteasome. In Oryza sativa subsp. japonica (Rice), this protein is NPL4-like protein.